The following is a 107-amino-acid chain: Iron-binding protein IscA (107 aa).

The Fe cation site is built by cysteine 35, cysteine 99, and cysteine 101.

The protein belongs to the HesB/IscA family. In terms of assembly, homodimer; may form tetramers and higher multimers. Requires Fe cation as cofactor.

Functionally, is able to transfer iron-sulfur clusters to apo-ferredoxin. Multiple cycles of [2Fe2S] cluster formation and transfer are observed, suggesting that IscA acts catalytically. Recruits intracellular free iron so as to provide iron for the assembly of transient iron-sulfur cluster in IscU in the presence of IscS, L-cysteine and the thioredoxin reductase system TrxA/TrxB. This chain is Iron-binding protein IscA, found in Serratia proteamaculans (strain 568).